The following is a 194-amino-acid chain: Glycerol-3-phosphate acyltransferase (194 aa).

Helical transmembrane passes span 3–23, 52–72, 80–100, 112–132, 135–155, and 162–182; these read AGLF…GLLL, VGIL…LLAW, MQAW…FLLF, VFLA…ILLV, WRYI…IIFF, and LLIA…SNIS.

It belongs to the PlsY family. As to quaternary structure, probably interacts with PlsX.

It localises to the cell inner membrane. The catalysed reaction is an acyl phosphate + sn-glycerol 3-phosphate = a 1-acyl-sn-glycero-3-phosphate + phosphate. It participates in lipid metabolism; phospholipid metabolism. Catalyzes the transfer of an acyl group from acyl-phosphate (acyl-PO(4)) to glycerol-3-phosphate (G3P) to form lysophosphatidic acid (LPA). This enzyme utilizes acyl-phosphate as fatty acyl donor, but not acyl-CoA or acyl-ACP. The chain is Glycerol-3-phosphate acyltransferase from Trichlorobacter lovleyi (strain ATCC BAA-1151 / DSM 17278 / SZ) (Geobacter lovleyi).